The primary structure comprises 268 residues: Ethylene-responsive transcription factor ERN1 (268 aa).

Over residues 1-21 (MEIQFQQPNMQNQKAGISVTN) the composition is skewed to polar residues. Residues 1-36 (MEIQFQQPNMQNQKAGISVTNKGGKFKGRNRNSNNT) form a disordered region. A DNA-binding region (AP2/ERF) is located at residues 38–95 (KFVGVRQRPSGRWVAEIKDTTQKIRMWLGTFETAEEAARAYDEAACLLRGSNTRTNFI). The disordered stretch occupies residues 114 to 154 (NRKGDKKQEDGAVASAPSNSKTTISNTSTITSNDDNKESTL). Low complexity predominate over residues 131–146 (SNSKTTISNTSTITSN).

This sequence belongs to the AP2/ERF transcription factor family. ERF subfamily. In terms of tissue distribution, expressed in roots, root hairs and leaves. Expressed in root epidermis and root hairs.

The protein localises to the nucleus. In terms of biological role, transcription factor involved in symbiotic nodule signaling in response to rhizobial Nod factors (NFs). Binds to the GCC-box (NF-responsive box) of ENOD11 promoter. Acts as a transcriptional activator of NF-responsive box-containing target gene promoters in root hairs. Functions as a transcriptional regulator required for root infection by symbiotic rhizobia, infection thread (IT) formation and maintenance, and nodule development. Necessary for NF-induced gene expression and spontaneous nodulation activated by CCAMK. Functions downstream of CCAMK to activate nodulation gene expression. Involved in early stages of root nodule development. Functions redundantly with ERN2. Is essential with ERN2 for the initiation of root hair infection, and nodule organogenesis and development. Required for accurate expression of the NF signaling genes ENOD11 and ENOD12. The sequence is that of Ethylene-responsive transcription factor ERN1 from Medicago truncatula (Barrel medic).